The primary structure comprises 563 residues: Kelch repeat and BTB domain-containing protein 1 (563 aa).

One can recognise a BTB domain in the interval 21 to 88; the sequence is CDINIVINDE…IYGIPLSLTN (68 aa). Positions 123-219 constitute a BACK domain; the sequence is CIDFYIYADK…SLLSPQVIKS (97 aa). Kelch repeat units lie at residues 252–297, 298–346, 347–395, 397–441, 442–492, and 494–538; these read IELI…VLDN, IIYM…ADDE, YIYC…MLNG, IYVI…VHAG, KIYI…SAHN, and LYVG…CEPI.

As to quaternary structure, interacts (via BTB domain) with host CUL3.

It is found in the host cytoplasm. Functionally, probable substrate-specific adapter of CUL3-containing E3 ubiquitin-protein ligases which mediate the ubiquitination and subsequent proteasomal degradation of host target proteins. The polypeptide is Kelch repeat and BTB domain-containing protein 1 (KBTB1) (Cowpox virus (strain Brighton Red) (CPV)).